A 273-amino-acid polypeptide reads, in one-letter code: MGSVQRQDLVLFSDQSVLPAHFFQDSNSHNLFFITHQSCTQPLWMINALVETHVLGSPSSLNESSSSMLPSSTRSHAVLASFIHEQNYFTNSLNKLKIPSNNYNVLDFLSDFIVNNIHNKPRDKILSDVLAKFSAAIQNNPTDTIVIIEQPELLLSLVSGLTCSELNNKFITPLLRQCKVLIIVSNSDIFNIDEYDASVHSSNLQNFYKSSFIKSMINLNLNPLKTGFAKDVTGSLHVCRGGAPIATSNTSLHVVENEYLYLNEKESTKLFYR.

Belongs to the ELP6 family. Component of the elongator complex which consists of ELP1/IKI3, ELP2, ELP3, ELP4, ELP5/IKI1 and ELP6. The elongator complex is composed of two copies of the Elp123 subcomplex (composed of ELP1/IKI3, ELP2 and ELP3) and two copies of the Elp456 subcomplex (composed of ELP4, ELP5/IKI1 and ELP6). The Elp123 subcomplex forms a two-lobed scaffold, which binds the Elp456 subcomplex asymmetrically. In each lobe, ELP2 is tightly sandwiched between ELP1/IKI3 and ELP3. The Elp123 subcomplex binds tRNA through ELP1/IKI3 and ELP3 and can bind 2 tRNAs simultaneously. tRNA-binding by the Elp123 subcomplex induces conformational rearrangements which precisely position the targeted anticodon base in the active site. The Elp456 subcomplex binds tRNA and has ATPase activity.

The protein localises to the cytoplasm. It is found in the nucleus. It functions in the pathway tRNA modification; 5-methoxycarbonylmethyl-2-thiouridine-tRNA biosynthesis. In terms of biological role, component of the elongator complex which is required for multiple tRNA modifications, including mcm5U (5-methoxycarbonylmethyl uridine), mcm5s2U (5-methoxycarbonylmethyl-2-thiouridine), and ncm5U (5-carbamoylmethyl uridine). The elongator complex catalyzes formation of carboxymethyluridine in the wobble base at position 34 in tRNAs. It functions as a gamma-toxin target (TOT); disruption of the complex confers resistance to Kluyveromyces lactis toxin zymocin (pGKL1 killer toxin). May also be involved in sensitivity to Pichia inositovora toxin. The protein is Elongator complex protein 6 (ELP6) of Saccharomyces cerevisiae (strain ATCC 204508 / S288c) (Baker's yeast).